Here is a 1774-residue protein sequence, read N- to C-terminus: U3 small nucleolar RNA-associated protein 10 (1774 aa).

The interval 1209–1228 (TEQGKSDGDESGSEPDNDNP) is disordered. Residues 1734-1772 (LVPVIAELLEDDDEEVEQEVRTGLVKVVETVLGEPFDRY) form an HEAT repeat.

It belongs to the HEATR1/UTP10 family. Component of the ribosomal small subunit (SSU) processome.

It is found in the nucleus. The protein localises to the nucleolus. In terms of biological role, involved in nucleolar processing of pre-18S ribosomal RNA. Involved in ribosome biosynthesis. The protein is U3 small nucleolar RNA-associated protein 10 of Eremothecium gossypii (strain ATCC 10895 / CBS 109.51 / FGSC 9923 / NRRL Y-1056) (Yeast).